The primary structure comprises 268 residues: MNLTLKKFQVHPFHLVAPSPWPILVSFSVMSIMLTLVFNMHGFMHNNYWVVFSAIVAIMTMALWFRDIISEATYLGDHTLAVRKGLNIGFILFVVSELFFFIAIFWAFFHSAMAPTIELGGVWPPVGIEAIGPSELPLLNTILLLCSGATLTWSHHALLGGNRFNTLLGLILTIALAVTFMICQYMEYSNAPFTISDGIFGSVFYFGTGFHGLHIIIGIIMLGVSLWRIYTYQLTNNHHVGYETSILYYHFVDVVWLFLYIVFYWWGT.

A run of 7 helical transmembrane segments spans residues 23-43 (ILVS…MHGF), 49-69 (WVVF…RDII), 88-108 (IGFI…FWAF), 141-161 (TILL…LLGG), 166-186 (TLLG…CQYM), 203-223 (VFYF…IMLG), and 246-266 (ILYY…FYWW).

This sequence belongs to the cytochrome c oxidase subunit 3 family. Component of the cytochrome c oxidase (complex IV, CIV), a multisubunit enzyme composed of a catalytic core of 3 subunits and several supernumerary subunits. The complex exists as a monomer or a dimer and forms supercomplexes (SCs) in the inner mitochondrial membrane with ubiquinol-cytochrome c oxidoreductase (cytochrome b-c1 complex, complex III, CIII).

The protein resides in the mitochondrion inner membrane. It catalyses the reaction 4 Fe(II)-[cytochrome c] + O2 + 8 H(+)(in) = 4 Fe(III)-[cytochrome c] + 2 H2O + 4 H(+)(out). Its function is as follows. Component of the cytochrome c oxidase, the last enzyme in the mitochondrial electron transport chain which drives oxidative phosphorylation. The respiratory chain contains 3 multisubunit complexes succinate dehydrogenase (complex II, CII), ubiquinol-cytochrome c oxidoreductase (cytochrome b-c1 complex, complex III, CIII) and cytochrome c oxidase (complex IV, CIV), that cooperate to transfer electrons derived from NADH and succinate to molecular oxygen, creating an electrochemical gradient over the inner membrane that drives transmembrane transport and the ATP synthase. Cytochrome c oxidase is the component of the respiratory chain that catalyzes the reduction of oxygen to water. Electrons originating from reduced cytochrome c in the intermembrane space (IMS) are transferred via the dinuclear copper A center (CU(A)) of subunit 2 and heme A of subunit 1 to the active site in subunit 1, a binuclear center (BNC) formed by heme A3 and copper B (CU(B)). The BNC reduces molecular oxygen to 2 water molecules using 4 electrons from cytochrome c in the IMS and 4 protons from the mitochondrial matrix. This is Cytochrome c oxidase subunit 3 (COX3) from Yarrowia lipolytica (strain CLIB 122 / E 150) (Yeast).